We begin with the raw amino-acid sequence, 184 residues long: Peptide deformylase (184 aa).

Fe cation contacts are provided by cysteine 111 and histidine 154. The active site involves glutamate 155. Histidine 158 is a binding site for Fe cation.

Belongs to the polypeptide deformylase family. The cofactor is Fe(2+).

It catalyses the reaction N-terminal N-formyl-L-methionyl-[peptide] + H2O = N-terminal L-methionyl-[peptide] + formate. In terms of biological role, removes the formyl group from the N-terminal Met of newly synthesized proteins. Requires at least a dipeptide for an efficient rate of reaction. N-terminal L-methionine is a prerequisite for activity but the enzyme has broad specificity at other positions. The sequence is that of Peptide deformylase from Macrococcus caseolyticus (strain JCSC5402) (Macrococcoides caseolyticum).